Consider the following 445-residue polypeptide: GTPase Der (445 aa).

EngA-type G domains are found at residues 3-167 (PVIA…YAGQ) and 180-353 (VKIA…AAAM). Residues 9 to 16 (GRPNVGKS), 56 to 60 (DTGGF), 119 to 122 (NKAE), 186 to 193 (GRPNVGKS), 233 to 237 (DTAGL), and 298 to 301 (NKWD) each bind GTP. Residues 354–438 (AKLPTPKLTR…PLRIEFRSST (85 aa)) form the KH-like domain.

It belongs to the TRAFAC class TrmE-Era-EngA-EngB-Septin-like GTPase superfamily. EngA (Der) GTPase family. In terms of assembly, associates with the 50S ribosomal subunit.

Functionally, GTPase that plays an essential role in the late steps of ribosome biogenesis. The sequence is that of GTPase Der from Paraburkholderia xenovorans (strain LB400).